A 658-amino-acid polypeptide reads, in one-letter code: MMELERRAYSKEVHQRLRKQVEEIRQLEMLRAKLQTQINVAQSQVKRLGDKKHLAEMECLLKSRAQVQVEIEALQEQNRALDKQIQDWETHVLTQSKEASAPDLIMYQKMKIQRRIRILEDQLDRVTCHFDIHLVRNAALREELELLRIERGRYLNMDRKLKKEIHLLREMVGALSTSSTSAYTAREEAKTKMGMLQERAEKELAQSDTEAQILLRQISHLEQLHRFLKLKNDERQPDPRVVQKAEQRDWEVSEGLRKTSQEKLVLRYEDTLGKLAQLTGESDPDLLVEKYLELEERNFAEFNFINEQNSEIHHLQEEIKEMQEALVSEHASQDKQRMQQEQQCKMLQQDVDKMCSESEQLEGRFQVLRGQLEKIKTDIQVLFDKAKCDSSVIKDLLGVKTYMRDRDIGLFLSTIERRLVQLLTVQAFLQVQNLAPLADAALLALGQSLQEPSKKTTPLKPPDTMEDSSGAVIKEDYPMSKEELLSQVMKSLQLQDEEESAKKLDSSPSLTLSSPQISLVTVPKHSKKTSVVPESILSHKTNRGRGTGSVSHVTFGDSASAAGPVAMASASASGAPVSSRSSQGGRGGFKPTSSSSYLGSTGYLETSRGRESTAGGVHSQSMGSELSRGLSSSSGHASSPAPPSRPSSSTSKDSRGYN.

Coiled-coil stretches lie at residues 11–156 (KEVH…RYLN), 186–234 (REEA…KNDE), and 303–380 (NFIN…TDIQ). 2 disordered regions span residues 496–552 (DEEE…SVSH) and 574–658 (GAPV…RGYN). 4 positions are modified to phosphoserine: S500, S506, S507, and S509. Composition is skewed to low complexity over residues 506 to 519 (SSPSLTLSSPQISL), 574 to 583 (GAPVSSRSSQ), 592 to 604 (TSSSSYLGSTGYL), and 621 to 639 (SMGSELSRGLSSSSGHASS).

Belongs to the ODA1/DCC2 family. As to quaternary structure, component of the outer dynein arm-docking complex along with ODAD2, ODAD3, ODAD4 and CLXN. Interacts with ODAD3. Interacts with ODAD4; this interaction may facilitate the recruitment and/or attachment of outer dynein arm docking complex proteins including ODAD1, ODAD3, and ODAD4 to ciliary axonemes. Interacts with DNAH9. Interacts with MNS1. Interacts with PIERCE1 and PIERCE2; the interactions link the outer dynein arms docking complex (ODA-DC) to the internal microtubule inner proteins (MIP) in cilium axoneme. Expressed in motile ciliated tissues.

The protein resides in the cytoplasm. It localises to the cytoskeleton. Its subcellular location is the cilium axoneme. Component of the outer dynein arm-docking complex that mediates outer dynein arms (ODA) binding onto the doublet microtubule. Involved in mediating assembly of both ODAs and their axonemal docking complex onto ciliary microtubules. This is Outer dynein arm-docking complex subunit 1 (Odad1) from Mus musculus (Mouse).